Consider the following 387-residue polypeptide: Queuine tRNA-ribosyltransferase (387 aa).

Asp93 functions as the Proton acceptor in the catalytic mechanism. Residues 93–97 (DSGGF), Asp147, Gln190, and Gly217 each bind substrate. The tract at residues 248–254 (GVGTPDD) is RNA binding. Asp267 functions as the Nucleophile in the catalytic mechanism. The RNA binding; important for wobble base 34 recognition stretch occupies residues 272 to 276 (TRAGR). Zn(2+)-binding residues include Cys305, Cys307, Cys310, and His336.

Belongs to the queuine tRNA-ribosyltransferase family. As to quaternary structure, homodimer. Within each dimer, one monomer is responsible for RNA recognition and catalysis, while the other monomer binds to the replacement base PreQ1. The cofactor is Zn(2+).

It carries out the reaction 7-aminomethyl-7-carbaguanine + guanosine(34) in tRNA = 7-aminomethyl-7-carbaguanosine(34) in tRNA + guanine. It participates in tRNA modification; tRNA-queuosine biosynthesis. Its function is as follows. Catalyzes the base-exchange of a guanine (G) residue with the queuine precursor 7-aminomethyl-7-deazaguanine (PreQ1) at position 34 (anticodon wobble position) in tRNAs with GU(N) anticodons (tRNA-Asp, -Asn, -His and -Tyr). Catalysis occurs through a double-displacement mechanism. The nucleophile active site attacks the C1' of nucleotide 34 to detach the guanine base from the RNA, forming a covalent enzyme-RNA intermediate. The proton acceptor active site deprotonates the incoming PreQ1, allowing a nucleophilic attack on the C1' of the ribose to form the product. After dissociation, two additional enzymatic reactions on the tRNA convert PreQ1 to queuine (Q), resulting in the hypermodified nucleoside queuosine (7-(((4,5-cis-dihydroxy-2-cyclopenten-1-yl)amino)methyl)-7-deazaguanosine). The protein is Queuine tRNA-ribosyltransferase of Gluconacetobacter diazotrophicus (strain ATCC 49037 / DSM 5601 / CCUG 37298 / CIP 103539 / LMG 7603 / PAl5).